The primary structure comprises 459 residues: uncharacterized protein (459 aa).

The TRAM domain maps to 9 to 67 (KLEVGQTFPVTIKRLGINGEGVGYFKRQVVFIPGALPGEEVVAETTKIQRGFAEAKVKK). The [4Fe-4S] cluster site is built by Cys80, Cys86, Cys89, and Cys168. 4 residues coordinate S-adenosyl-L-methionine: Gln292, Tyr321, Asp342, and Asp390. Cys417 (nucleophile) is an active-site residue.

The protein belongs to the class I-like SAM-binding methyltransferase superfamily. RNA M5U methyltransferase family.

This is an uncharacterized protein from Bacillus anthracis.